Here is a 382-residue protein sequence, read N- to C-terminus: MEVNYERLRGSYNDYRKLELGLGEFGDDFVGLPDDPFCMNIRSTLNSISDWFHENQIGLVSEDHTLPEDPFCMRVRSTLNTISDWFHENQKEIGVVDQMLFETLSWFYNNDDDDGDDDDDGGGGGEAHDAFELVLPYLELKEILAVEVVCRSLRDSVGKEPFFWTSIDLNDSFLQYRVTDESLLKLTRRALGGVRCLNLGGCVGITDYGLKQVLASNPHLTKLSVSGCLRLSTAGLVSTLRDLKSSNRLGVKSLITGGALYFTKEQFKELNLLLGGDAKVGLQERKKRFYTSCRSEFYLEDDRVTDLEICPWCEKPSLVFDCPADTCPLKGQYPYSKSSCRACVVCIERCHECGSCLNDCENKPFCFAFSCVVCIEKRSNRL.

One can recognise an F-box domain in the interval arginine 16–serine 105.

In Arabidopsis thaliana (Mouse-ear cress), this protein is F-box protein At3g27290.